The primary structure comprises 202 residues: Energy-coupling factor transporter transmembrane protein BioN (202 aa).

3 consecutive transmembrane segments (helical) span residues 21-40, 44-63, and 68-90; these read LLSL…LLLL, VLVA…EALL, and IFLT…AALV.

The protein belongs to the CbiQ family. In terms of assembly, part of a biotin transporter complex composed of BioM, BioN and BioY.

It localises to the cell inner membrane. Functionally, involved in biotin uptake. The chain is Energy-coupling factor transporter transmembrane protein BioN (bioN) from Rhizobium etli (strain ATCC 51251 / DSM 11541 / JCM 21823 / NBRC 15573 / CFN 42).